The sequence spans 362 residues: Chorismate synthase (362 aa).

An NADP(+)-binding site is contributed by R47. FMN contacts are provided by residues 124–126 (RSS), G286, 301–305 (KPTAT), and R327.

Belongs to the chorismate synthase family. As to quaternary structure, homotetramer. FMNH2 is required as a cofactor.

The catalysed reaction is 5-O-(1-carboxyvinyl)-3-phosphoshikimate = chorismate + phosphate. The protein operates within metabolic intermediate biosynthesis; chorismate biosynthesis; chorismate from D-erythrose 4-phosphate and phosphoenolpyruvate: step 7/7. Its function is as follows. Catalyzes the anti-1,4-elimination of the C-3 phosphate and the C-6 proR hydrogen from 5-enolpyruvylshikimate-3-phosphate (EPSP) to yield chorismate, which is the branch point compound that serves as the starting substrate for the three terminal pathways of aromatic amino acid biosynthesis. This reaction introduces a second double bond into the aromatic ring system. In Nostoc punctiforme (strain ATCC 29133 / PCC 73102), this protein is Chorismate synthase.